The following is a 405-amino-acid chain: Argininosuccinate synthase (405 aa).

Residues 12-20 (AYSGGLDTS) and Ala-40 each bind ATP. Residues Tyr-92 and Ser-97 each coordinate L-citrulline. Gly-122 is a binding site for ATP. Residues Thr-124, Asn-128, and Asp-129 each contribute to the L-aspartate site. Asn-128 provides a ligand contact to L-citrulline. L-citrulline-binding residues include Arg-132, Ser-181, Ser-190, Glu-266, and Tyr-278.

It belongs to the argininosuccinate synthase family. Type 1 subfamily. In terms of assembly, homotetramer.

Its subcellular location is the cytoplasm. The enzyme catalyses L-citrulline + L-aspartate + ATP = 2-(N(omega)-L-arginino)succinate + AMP + diphosphate + H(+). It participates in amino-acid biosynthesis; L-arginine biosynthesis; L-arginine from L-ornithine and carbamoyl phosphate: step 2/3. In Edwardsiella ictaluri (strain 93-146), this protein is Argininosuccinate synthase.